The primary structure comprises 418 residues: L-rhamnose isomerase (418 aa).

Positions 262, 294, and 296 each coordinate Mn(2+).

This sequence belongs to the rhamnose isomerase family. As to quaternary structure, homotetramer. Requires Mn(2+) as cofactor.

It localises to the cytoplasm. It catalyses the reaction L-rhamnopyranose = L-rhamnulose. Its pathway is carbohydrate degradation; L-rhamnose degradation; glycerone phosphate from L-rhamnose: step 1/3. Functionally, catalyzes the interconversion of L-rhamnose and L-rhamnulose. The chain is L-rhamnose isomerase from Cronobacter sakazakii (strain ATCC BAA-894) (Enterobacter sakazakii).